The sequence spans 291 residues: ATP synthase gamma chain (291 aa).

This sequence belongs to the ATPase gamma chain family. F-type ATPases have 2 components, CF(1) - the catalytic core - and CF(0) - the membrane proton channel. CF(1) has five subunits: alpha(3), beta(3), gamma(1), delta(1), epsilon(1). CF(0) has three main subunits: a, b and c.

The protein localises to the cell membrane. In terms of biological role, produces ATP from ADP in the presence of a proton gradient across the membrane. The gamma chain is believed to be important in regulating ATPase activity and the flow of protons through the CF(0) complex. This Streptococcus equi subsp. zooepidemicus (strain MGCS10565) protein is ATP synthase gamma chain.